A 131-amino-acid polypeptide reads, in one-letter code: Small ribosomal subunit protein uS8 (131 aa).

The protein belongs to the universal ribosomal protein uS8 family. As to quaternary structure, part of the 30S ribosomal subunit. Contacts proteins S5 and S12.

In terms of biological role, one of the primary rRNA binding proteins, it binds directly to 16S rRNA central domain where it helps coordinate assembly of the platform of the 30S subunit. The sequence is that of Small ribosomal subunit protein uS8 from Alkalilimnicola ehrlichii (strain ATCC BAA-1101 / DSM 17681 / MLHE-1).